We begin with the raw amino-acid sequence, 431 residues long: Phosphomethylpyrimidine synthase (431 aa).

Residues N66, M95, Y124, H163, 185 to 187, 226 to 229, and E265 each bind substrate; these read SRG and DGLR. Position 269 (H269) interacts with Zn(2+). Y292 provides a ligand contact to substrate. Position 333 (H333) interacts with Zn(2+). C408, C411, and C415 together coordinate [4Fe-4S] cluster.

Belongs to the ThiC family. [4Fe-4S] cluster serves as cofactor.

It catalyses the reaction 5-amino-1-(5-phospho-beta-D-ribosyl)imidazole + S-adenosyl-L-methionine = 4-amino-2-methyl-5-(phosphooxymethyl)pyrimidine + CO + 5'-deoxyadenosine + formate + L-methionine + 3 H(+). It participates in cofactor biosynthesis; thiamine diphosphate biosynthesis. Catalyzes the synthesis of the hydroxymethylpyrimidine phosphate (HMP-P) moiety of thiamine from aminoimidazole ribotide (AIR) in a radical S-adenosyl-L-methionine (SAM)-dependent reaction. The protein is Phosphomethylpyrimidine synthase of Dehalococcoides mccartyi (strain CBDB1).